A 156-amino-acid polypeptide reads, in one-letter code: Small ribosomal subunit protein uS7 (156 aa).

It belongs to the universal ribosomal protein uS7 family. As to quaternary structure, part of the 30S ribosomal subunit. Contacts proteins S9 and S11.

Its function is as follows. One of the primary rRNA binding proteins, it binds directly to 16S rRNA where it nucleates assembly of the head domain of the 30S subunit. Is located at the subunit interface close to the decoding center, probably blocks exit of the E-site tRNA. The sequence is that of Small ribosomal subunit protein uS7 from Bacillus cereus (strain G9842).